The chain runs to 484 residues: Pheophytinase, chloroplastic (484 aa).

Residues Met-1–Ser-47 constitute a chloroplast transit peptide.

Belongs to the AB hydrolase superfamily. In terms of assembly, interacts with HCAR, RCCR, PAO and the LHCII complex. Part of a SGR1-CCE-LHCII complex, which acts in chlorophyll breakdown.

It localises to the plastid. Its subcellular location is the chloroplast thylakoid membrane. The protein resides in the chloroplast stroma. Functionally, alpha/beta hydrolase dephytylating specifically the Mg-free chlorophyll pigment (pheophytin), yielding pheophorbide. No activity on chlorophyll. Belongs to the chlorophyll catabolic enzymes (CCEs). The polypeptide is Pheophytinase, chloroplastic (PPH) (Arabidopsis thaliana (Mouse-ear cress)).